The sequence spans 322 residues: Reticulocalbin-1 (322 aa).

The first 19 residues, 1–19, serve as a signal peptide directing secretion; the sequence is MDVLGFICAVFLGTVVLHA. Residue asparagine 44 is glycosylated (N-linked (GlcNAc...) asparagine). EF-hand domains lie at 70 to 105, 106 to 141, 157 to 192, 194 to 229, 235 to 270, and 271 to 306; these read ESKD…VQKR, YVYE…YYLS, KMLP…EEFE, MKDI…HEDR, WVKT…QDYD, and HAQA…FVGS. Residues aspartate 83, aspartate 85, asparagine 87, tyrosine 89, glutamate 94, aspartate 119, asparagine 121, aspartate 123, lysine 125, glutamate 130, aspartate 170, aspartate 172, aspartate 174, glutamate 181, aspartate 207, asparagine 209, aspartate 211, histidine 213, glutamate 218, aspartate 248, asparagine 250, aspartate 252, lysine 254, glutamate 259, aspartate 284, aspartate 286, aspartate 288, methionine 290, and glutamate 295 each contribute to the Ca(2+) site. A Prevents secretion from ER motif is present at residues 319-322; sequence HDEL.

Belongs to the CREC family.

The protein localises to the endoplasmic reticulum lumen. May regulate calcium-dependent activities in the endoplasmic reticulum lumen or post-ER compartment. This is Reticulocalbin-1 (rcn1) from Takifugu rubripes (Japanese pufferfish).